The primary structure comprises 357 residues: Anthranilate phosphoribosyltransferase (357 aa).

Residues glycine 94, 97-98 (GD), threonine 102, 104-107 (NLST), 122-130 (KHGNRAASS), and glycine 134 each bind 5-phospho-alpha-D-ribose 1-diphosphate. An anthranilate-binding site is contributed by glycine 94. Serine 106 lines the Mg(2+) pocket. Residue asparagine 125 participates in anthranilate binding. Anthranilate is bound at residue arginine 180. Mg(2+) contacts are provided by aspartate 238 and glutamate 239.

The protein belongs to the anthranilate phosphoribosyltransferase family. Homodimer. Mg(2+) serves as cofactor.

It catalyses the reaction N-(5-phospho-beta-D-ribosyl)anthranilate + diphosphate = 5-phospho-alpha-D-ribose 1-diphosphate + anthranilate. It participates in amino-acid biosynthesis; L-tryptophan biosynthesis; L-tryptophan from chorismate: step 2/5. In terms of biological role, catalyzes the transfer of the phosphoribosyl group of 5-phosphorylribose-1-pyrophosphate (PRPP) to anthranilate to yield N-(5'-phosphoribosyl)-anthranilate (PRA). The protein is Anthranilate phosphoribosyltransferase of Mycobacterium sp. (strain KMS).